Reading from the N-terminus, the 297-residue chain is N-acetylmuramic acid 6-phosphate etherase (297 aa).

The region spanning 55–218 is the SIS domain; it reads AAKRYSKGGR…STGVMIKQGK (164 aa). The active-site Proton donor is E83. E114 is a catalytic residue.

It belongs to the GCKR-like family. MurNAc-6-P etherase subfamily. Homodimer.

The catalysed reaction is N-acetyl-D-muramate 6-phosphate + H2O = N-acetyl-D-glucosamine 6-phosphate + (R)-lactate. The protein operates within amino-sugar metabolism; N-acetylmuramate degradation. Specifically catalyzes the cleavage of the D-lactyl ether substituent of MurNAc 6-phosphate, producing GlcNAc 6-phosphate and D-lactate. The protein is N-acetylmuramic acid 6-phosphate etherase of Lactobacillus gasseri (strain ATCC 33323 / DSM 20243 / BCRC 14619 / CIP 102991 / JCM 1131 / KCTC 3163 / NCIMB 11718 / NCTC 13722 / AM63).